The primary structure comprises 216 residues: MOB kinase activator-like 1 homolog C (216 aa).

Cys-78, Cys-83, His-160, and His-165 together coordinate Zn(2+).

It belongs to the MOB1/phocein family.

The protein is MOB kinase activator-like 1 homolog C (mobC) of Dictyostelium discoideum (Social amoeba).